A 270-amino-acid chain; its full sequence is uncharacterized protein (270 aa).

The first 22 residues, Met-1 to Gly-22, serve as a signal peptide directing secretion. Cys-23 is lipidated: N-palmitoyl cysteine. Cys-23 carries S-diacylglycerol cysteine lipidation.

It belongs to the staphylococcal tandem lipoprotein family.

The protein localises to the cell membrane. This is an uncharacterized protein from Staphylococcus aureus (strain NCTC 8325 / PS 47).